The following is a 1149-amino-acid chain: cGMP-specific 3',5'-cyclic phosphodiesterase (1149 aa).

Low complexity-rich tracts occupy residues 1–19 and 31–47; these read MHGTVSRSSSSSNMTDVSS and ATSSSTAATTSASASSS. Positions 1–175 are disordered; sequence MHGTVSRSSS…STTASQQDVD (175 aa). Over residues 48-59 the composition is skewed to polar residues; the sequence is KPLTNGANKTAI. The segment covering 60–85 has biased composition (low complexity); the sequence is STAAGVTPGAAPGPGCAAIPASGSSG. Residues 96 to 108 are compositionally biased toward polar residues; the sequence is QSNNNRPAGSNRS. The span at 132–158 shows a compositional bias: low complexity; that stretch reads SSSSPSQSPSQSQSQSQASIQTQTSQQ. GAF domains are found at residues 278 to 430 and 462 to 643; these read DIDV…GIGI and NLEC…GLGI. The PDEase domain maps to 673–996; it reads SQDQTEKLTQ…RNWQDLAEKV (324 aa). Histidine 749 functions as the Proton donor in the catalytic mechanism. A divalent metal cation contacts are provided by histidine 753, histidine 789, aspartate 790, and aspartate 900. Disordered stretches follow at residues 1037–1066 and 1096–1149; these read QQSQHGSEDSHTPEHQRSGSRLSMKKTGAL and SHVS…CALL. Basic and acidic residues-rich tracts occupy residues 1042 to 1053 and 1096 to 1106; these read GSEDSHTPEHQR and SHVSEDMDDKS. The span at 1115-1135 shows a compositional bias: low complexity; sequence ASGSMGRMSASSSTSSAGGQM. Residues 1139-1149 show a composition bias toward basic residues; the sequence is SKKRSKLCALL. Cysteine 1146 carries the post-translational modification Cysteine methyl ester. Cysteine 1146 carries S-farnesyl cysteine lipidation. Residues 1147 to 1149 constitute a propeptide, removed in mature form; it reads ALL.

It belongs to the cyclic nucleotide phosphodiesterase family. In terms of assembly, interacts with PrBP. It depends on a divalent metal cation as a cofactor.

It localises to the cell membrane. The catalysed reaction is 3',5'-cyclic GMP + H2O = GMP + H(+). In terms of biological role, has a role regulating cGMP transport in Malpighian tubule principal cells. This is cGMP-specific 3',5'-cyclic phosphodiesterase from Drosophila yakuba (Fruit fly).